The chain runs to 99 residues: RNA-binding protein HI_1333 (99 aa).

The CRM domain occupies 2–98; sequence TTLSTKQKQF…SEEAKIQLPR (97 aa).

This is RNA-binding protein HI_1333 from Haemophilus influenzae (strain ATCC 51907 / DSM 11121 / KW20 / Rd).